Reading from the N-terminus, the 45-residue chain is COP9 signalosome complex subunit 4 (45 aa).

The protein belongs to the CSN4 family. As to quaternary structure, component of the CSN complex, probably composed of CSN1, CSN2, CSN3, CSN4, CSN5 (CSN5A or CSN5B), CSN6 (CSN6A or CSN6B), CSN7 and CSN8.

Its subcellular location is the cytoplasm. The protein resides in the nucleus. Its function is as follows. Component of the COP9 signalosome complex (CSN), a complex involved in various cellular and developmental processes such as photomorphogenesis and auxin and jasmonate responses. The CSN complex is an essential regulator of the ubiquitin (Ubl) conjugation pathway by mediating the deneddylation of the cullin subunits of SCF-type E3 ligase complexes, leading to decrease the Ubl ligase activity of SCF. It is involved in repression of photomorphogenesis in darkness by regulating the activity of COP1-containing Ubl ligase complexes. The chain is COP9 signalosome complex subunit 4 (CSN4) from Brassica oleracea (Wild cabbage).